We begin with the raw amino-acid sequence, 770 residues long: Cullin-1 (770 aa).

The 62-residue stretch at 700–761 (DRKLQIQAAI…EKEYLMRVEG (62 aa)) folds into the Cullin neddylation domain. A Glycyl lysine isopeptide (Lys-Gly) (interchain with G-Cter in NEDD8) cross-link involves residue Lys-714.

It belongs to the cullin family. As to quaternary structure, part of a complex that includes culA, fbxA and regA. Formation of this complex is dependent on the MAP kinase erkB. Neddylated; which enhances the ubiquitination activity of SCF.

The protein operates within protein modification; protein ubiquitination. Functionally, probable core component of cullin-based SCF-like E3 ubiquitin-protein ligase complexes which mediate the ubiquitination and subsequent proteasomal degradation of target proteins. The E3 ubiquitin-protein ligase activity of the complex is dependent on the neddylation of the cullin subunit. Required at several stages during development. CulA and fbxA regulate multicellular development by targeting regA for degradation via a pathway that requires erkB function, leading to an increase in cAMP and PKA activity. This Dictyostelium discoideum (Social amoeba) protein is Cullin-1 (culA).